The primary structure comprises 124 residues: Fluoride-specific ion channel FluC (124 aa).

Helical transmembrane passes span 1-21 (MLNT…RYGV), 36-56 (TMII…WFVV), 70-90 (TGIL…FLLI), and 100-120 (LYVI…FAII). Residues glycine 74 and threonine 77 each contribute to the Na(+) site.

This sequence belongs to the fluoride channel Fluc/FEX (TC 1.A.43) family.

The protein resides in the cell inner membrane. It carries out the reaction fluoride(in) = fluoride(out). With respect to regulation, na(+) is not transported, but it plays an essential structural role and its presence is essential for fluoride channel function. Its function is as follows. Fluoride-specific ion channel. Important for reducing fluoride concentration in the cell, thus reducing its toxicity. The sequence is that of Fluoride-specific ion channel FluC from Methylobacterium sp. (strain 4-46).